Reading from the N-terminus, the 310-residue chain is Deoxyribonuclease gamma (310 aa).

The signal sequence occupies residues 1–25 (MSLHPASPRLASLLLFILALHDTLA). A Bipartite nuclear localization signal motif is present at residues 40 to 56 (KKENHEAMDIIVKIIKR). Residues Glu105 and His160 contribute to the active site. An intrachain disulfide couples Cys199 to Cys236. Positions 289-310 (SRAFTNNRKSVSLKKRKKGNRS) are not required for free DNA-nuclease activity but required for activity towards liposome-coated DNA. Positions 301–307 (LKKRKKG) match the Nuclear localization signal motif.

The protein belongs to the DNase I family. Ca(2+) serves as cofactor. It depends on Mg(2+) as a cofactor. In terms of processing, poly-ADP-ribosylated by PARP1. ADP-ribosylation negatively regulates enzymatic activity during apoptosis. Expressed at high levels in liver, spleen and testes. Expressed at lower levels in heart, lungs, skeletal muscle and kidney. Not expressed in brain. Predominantly expressed in macrophages; at protein level. Secreted by mononuclear phagocytes.

It is found in the nucleus. It localises to the endoplasmic reticulum. Its subcellular location is the secreted. Its activity is regulated as follows. Inhibited by zinc. Inhibited by heparin and proteolysis by plasmin. In terms of biological role, has DNA hydrolytic activity. Is capable of both single- and double-stranded DNA cleavage, producing DNA fragments with 3'-OH ends. Can cleave chromatin to nucleosomal units and cleaves nucleosomal and liposome-coated DNA. Acts in internucleosomal DNA fragmentation (INDF) during apoptosis and necrosis. The role in apoptosis includes myogenic and neuronal differentiation, and BCR-mediated clonal deletion of self-reactive B cells. Is active on chromatin in apoptotic cell-derived membrane-coated microparticles and thus suppresses anti-DNA autoimmunity. Together with DNASE1, plays a key role in degrading neutrophil extracellular traps (NETs). NETs are mainly composed of DNA fibers and are released by neutrophils to bind pathogens during inflammation. Degradation of intravascular NETs by DNASE1 and DNASE1L3 is required to prevent formation of clots that obstruct blood vessels and cause organ damage following inflammation. The sequence is that of Deoxyribonuclease gamma from Mus musculus (Mouse).